A 67-amino-acid chain; its full sequence is DNA-directed RNA polymerase subunit omega (67 aa).

It belongs to the RNA polymerase subunit omega family. In terms of assembly, the RNAP catalytic core consists of 2 alpha, 1 beta, 1 beta' and 1 omega subunit. When a sigma factor is associated with the core the holoenzyme is formed, which can initiate transcription.

The catalysed reaction is RNA(n) + a ribonucleoside 5'-triphosphate = RNA(n+1) + diphosphate. Functionally, promotes RNA polymerase assembly. Latches the N- and C-terminal regions of the beta' subunit thereby facilitating its interaction with the beta and alpha subunits. The polypeptide is DNA-directed RNA polymerase subunit omega (Variovorax paradoxus (strain S110)).